The sequence spans 288 residues: Glycine--tRNA ligase alpha subunit (288 aa).

Belongs to the class-II aminoacyl-tRNA synthetase family. In terms of assembly, tetramer of two alpha and two beta subunits.

It localises to the cytoplasm. It carries out the reaction tRNA(Gly) + glycine + ATP = glycyl-tRNA(Gly) + AMP + diphosphate. The chain is Glycine--tRNA ligase alpha subunit from Rickettsia rickettsii (strain Iowa).